An 84-amino-acid polypeptide reads, in one-letter code: U4-theraphotoxin-Hhn1a (84 aa).

The first 22 residues, 1-22 (MKVTLIAILTCAAVLVLHTTAA), serve as a signal peptide directing secretion. Positions 23–47 (EELEESQLMEVGMPDTELAAVDEER) are excised as a propeptide. 3 cysteine pairs are disulfide-bonded: Cys51/Cys65, Cys55/Cys76, and Cys70/Cys81.

The protein belongs to the neurotoxin 12 (Hwtx-2) family. 02 (Hwtx-2) subfamily. In terms of tissue distribution, expressed by the venom gland.

Its subcellular location is the secreted. In terms of biological role, postsynaptic neurotoxin. In Cyriopagopus hainanus (Chinese bird spider), this protein is U4-theraphotoxin-Hhn1a.